Consider the following 200-residue polypeptide: dTTP/UTP pyrophosphatase (200 aa).

D72 (proton acceptor) is an active-site residue.

This sequence belongs to the Maf family. YhdE subfamily. It depends on a divalent metal cation as a cofactor.

The protein localises to the cytoplasm. It carries out the reaction dTTP + H2O = dTMP + diphosphate + H(+). The enzyme catalyses UTP + H2O = UMP + diphosphate + H(+). Its function is as follows. Nucleoside triphosphate pyrophosphatase that hydrolyzes dTTP and UTP. May have a dual role in cell division arrest and in preventing the incorporation of modified nucleotides into cellular nucleic acids. The sequence is that of dTTP/UTP pyrophosphatase from Pseudomonas syringae pv. syringae (strain B728a).